The primary structure comprises 60 residues: Protein P7 (60 aa).

Residues 28–48 (FIGVTLIGMFISYYLYALISI) form a helical membrane-spanning segment.

Its subcellular location is the host membrane. This chain is Protein P7, found in Vitis vinifera (Grape).